The chain runs to 535 residues: Sodium/hydrogen exchanger 1 (535 aa).

Over 1 to 21 (MGMEVAAARLGALYTTSDYAS) the chain is Cytoplasmic. A helical transmembrane segment spans residues 22-42 (VVSINLFVALLCACIVLGHLL). At 43–46 (EENR) the chain is on the vacuolar side. A helical membrane pass occupies residues 47–67 (WVNESITALIIGLCTGVVILL). At 68 to 75 (MTKGKSSH) the chain is on the cytoplasmic side. The helical transmembrane segment at 76-96 (LFVFSEDLFFIYLLPPIIFNA) threads the bilayer. Residues 97-114 (GFQVKKKQFFRNFMTITL) lie on the Vacuolar side of the membrane. The chain crosses the membrane as a helical span at residues 115–135 (FGAVGTMISFFTISIAAIAIF). Topologically, residues 136-137 (SR) are cytoplasmic. The chain crosses the membrane as a helical span at residues 138-158 (MNIGTLDVGDFLAIGAIFSAT). Topologically, residues 159-173 (DSVCTLQVLNQDETP) are vacuolar. A helical transmembrane segment spans residues 174–194 (FLYSLVFGEGVVNDATSIVLF). Topologically, residues 195–218 (NALQNFDLVHIDAAVVLKFLGNFF) are cytoplasmic. The helical transmembrane segment at 219 to 239 (YLFLSSTFLGVFAGLLSAYII) threads the bilayer. Residues 240–264 (KKLYIGRHSTDREVALMMLMAYLSY) are Vacuolar-facing. Residues 265 to 285 (MLAELLDLSGILTVFFCGIVM) traverse the membrane as a helical segment. At 286 to 304 (SHYTWHNVTESSRVTTKHA) the chain is on the cytoplasmic side. A helical transmembrane segment spans residues 305–325 (FATLSFIAETFLFLYVGMDAL). Topologically, residues 326–344 (DIEKWEFASDRPGKSIGIS) are vacuolar. Residues 345 to 365 (SILLGLVLIGRAAFVFPLSFL) form a helical membrane-spanning segment. At 366–381 (SNLTKKAPNEKITWRQ) the chain is on the cytoplasmic side. A helical membrane pass occupies residues 382–402 (QVVIWWAGLMRGAVSIALAYN). Residues 403–415 (KFTRSGHTQLHGN) are Vacuolar-facing. Residues 416 to 436 (AIMITSTITVVLFSTMVFGMM) form a helical membrane-spanning segment. The Cytoplasmic portion of the chain corresponds to 437–535 (TKPLIRLLLP…SPTEQSHGGR (99 aa)). Residues 452 to 478 (VTSEPSSPKSLHSPLLTSMQGSDLEST) form a disordered region. A compositionally biased stretch (low complexity) spans 454-469 (SEPSSPKSLHSPLLTS).

The protein belongs to the monovalent cation:proton antiporter 1 (CPA1) transporter (TC 2.A.36) family.

It is found in the vacuole membrane. The enzyme catalyses Na(+)(in) + H(+)(out) = Na(+)(out) + H(+)(in). It carries out the reaction K(+)(in) + H(+)(out) = K(+)(out) + H(+)(in). In terms of biological role, vacuolar antiporter that acts in low affinity electroneutral exchange of protons H(+) for cations such as Na(+) or K(+) across membranes. Plays important roles in the transport of Na(+) and K(+) accumulated in the cytoplasm into vacuoles, and is involved in salt stress tolerance. The chain is Sodium/hydrogen exchanger 1 from Oryza sativa subsp. japonica (Rice).